A 473-amino-acid chain; its full sequence is ATP synthase subunit beta (473 aa).

Residue 158–165 coordinates ATP; that stretch reads GGAGVGKT.

This sequence belongs to the ATPase alpha/beta chains family. In terms of assembly, F-type ATPases have 2 components, CF(1) - the catalytic core - and CF(0) - the membrane proton channel. CF(1) has five subunits: alpha(3), beta(3), gamma(1), delta(1), epsilon(1). CF(0) has three main subunits: a(1), b(2) and c(9-12). The alpha and beta chains form an alternating ring which encloses part of the gamma chain. CF(1) is attached to CF(0) by a central stalk formed by the gamma and epsilon chains, while a peripheral stalk is formed by the delta and b chains.

Its subcellular location is the cell membrane. The enzyme catalyses ATP + H2O + 4 H(+)(in) = ADP + phosphate + 5 H(+)(out). In terms of biological role, produces ATP from ADP in the presence of a proton gradient across the membrane. The catalytic sites are hosted primarily by the beta subunits. This Geobacillus kaustophilus (strain HTA426) protein is ATP synthase subunit beta.